A 422-amino-acid polypeptide reads, in one-letter code: Serine--tRNA ligase (422 aa).

229–231 provides a ligand contact to L-serine; that stretch reads TAE. Residue 260-262 participates in ATP binding; sequence RAE. Glutamate 283 contacts L-serine. 347–350 is a binding site for ATP; it reads EISS. Serine 383 lines the L-serine pocket.

Belongs to the class-II aminoacyl-tRNA synthetase family. Type-1 seryl-tRNA synthetase subfamily. As to quaternary structure, homodimer. The tRNA molecule binds across the dimer.

The protein localises to the cytoplasm. The catalysed reaction is tRNA(Ser) + L-serine + ATP = L-seryl-tRNA(Ser) + AMP + diphosphate + H(+). The enzyme catalyses tRNA(Sec) + L-serine + ATP = L-seryl-tRNA(Sec) + AMP + diphosphate + H(+). The protein operates within aminoacyl-tRNA biosynthesis; selenocysteinyl-tRNA(Sec) biosynthesis; L-seryl-tRNA(Sec) from L-serine and tRNA(Sec): step 1/1. Functionally, catalyzes the attachment of serine to tRNA(Ser). Is also able to aminoacylate tRNA(Sec) with serine, to form the misacylated tRNA L-seryl-tRNA(Sec), which will be further converted into selenocysteinyl-tRNA(Sec). This is Serine--tRNA ligase from Halothermothrix orenii (strain H 168 / OCM 544 / DSM 9562).